The sequence spans 369 residues: Superinfection exclusion protein (369 aa).

The N-terminal stretch at M1–T15 is a signal peptide.

The protein belongs to the serpin family. Orthopoxvirus OPG040 subfamily. As to quaternary structure, interacts with A56 protein.

Its subcellular location is the virion membrane. The protein localises to the host cell membrane. In terms of biological role, prevents cell to cell fusion via its interaction with A56 protein. The A56-K2 complex associates with components of the entry fusion complex (EFC) presumably to avoid superinfection and syncytium formation. The chain is Superinfection exclusion protein (OPG040) from Vaccinia virus (strain Copenhagen) (VACV).